We begin with the raw amino-acid sequence, 514 residues long: Protein nucleotidyltransferase YdiU (514 aa).

Gly-111, Gly-113, Arg-114, Lys-134, Asp-146, Gly-147, Arg-197, and Arg-204 together coordinate ATP. The active-site Proton acceptor is the Asp-276. Positions 277 and 286 each coordinate Mg(2+). Asp-286 provides a ligand contact to ATP.

This sequence belongs to the SELO family. Mg(2+) serves as cofactor. Mn(2+) is required as a cofactor.

The catalysed reaction is L-seryl-[protein] + ATP = 3-O-(5'-adenylyl)-L-seryl-[protein] + diphosphate. The enzyme catalyses L-threonyl-[protein] + ATP = 3-O-(5'-adenylyl)-L-threonyl-[protein] + diphosphate. It catalyses the reaction L-tyrosyl-[protein] + ATP = O-(5'-adenylyl)-L-tyrosyl-[protein] + diphosphate. It carries out the reaction L-histidyl-[protein] + UTP = N(tele)-(5'-uridylyl)-L-histidyl-[protein] + diphosphate. The catalysed reaction is L-seryl-[protein] + UTP = O-(5'-uridylyl)-L-seryl-[protein] + diphosphate. The enzyme catalyses L-tyrosyl-[protein] + UTP = O-(5'-uridylyl)-L-tyrosyl-[protein] + diphosphate. Nucleotidyltransferase involved in the post-translational modification of proteins. It can catalyze the addition of adenosine monophosphate (AMP) or uridine monophosphate (UMP) to a protein, resulting in modifications known as AMPylation and UMPylation. This chain is Protein nucleotidyltransferase YdiU, found in Rhodococcus jostii (strain RHA1).